We begin with the raw amino-acid sequence, 112 residues long: UPF0102 protein CHAB381_0216 (112 aa).

This sequence belongs to the UPF0102 family.

The sequence is that of UPF0102 protein CHAB381_0216 from Campylobacter hominis (strain ATCC BAA-381 / DSM 21671 / CCUG 45161 / LMG 19568 / NCTC 13146 / CH001A).